The following is a 492-amino-acid chain: 2-succinylbenzoate--CoA ligase (492 aa).

This sequence belongs to the ATP-dependent AMP-binding enzyme family. MenE subfamily.

The catalysed reaction is 2-succinylbenzoate + ATP + CoA = 2-succinylbenzoyl-CoA + AMP + diphosphate. It participates in quinol/quinone metabolism; 1,4-dihydroxy-2-naphthoate biosynthesis; 1,4-dihydroxy-2-naphthoate from chorismate: step 5/7. It functions in the pathway quinol/quinone metabolism; menaquinone biosynthesis. Functionally, converts 2-succinylbenzoate (OSB) to 2-succinylbenzoyl-CoA (OSB-CoA). The chain is 2-succinylbenzoate--CoA ligase from Staphylococcus aureus (strain USA300 / TCH1516).